The chain runs to 333 residues: Fructose-1,6-bisphosphatase class 1 (333 aa).

Residues Glu-92, Asp-113, Leu-115, and Asp-116 each coordinate Mg(2+). Substrate contacts are provided by residues 116 to 119 (DGSS), Asn-209, Tyr-242, and Lys-272. Glu-278 contacts Mg(2+).

Belongs to the FBPase class 1 family. In terms of assembly, homotetramer. The cofactor is Mg(2+).

It is found in the cytoplasm. It catalyses the reaction beta-D-fructose 1,6-bisphosphate + H2O = beta-D-fructose 6-phosphate + phosphate. It functions in the pathway carbohydrate biosynthesis; Calvin cycle. In Pelodictyon phaeoclathratiforme (strain DSM 5477 / BU-1), this protein is Fructose-1,6-bisphosphatase class 1.